The primary structure comprises 313 residues: Formimidoylglutamase (313 aa).

Residues His-130, Asp-155, His-157, Asp-159, Asp-241, and Asp-243 each contribute to the Mn(2+) site.

This sequence belongs to the arginase family. It depends on Mn(2+) as a cofactor.

It carries out the reaction N-formimidoyl-L-glutamate + H2O = formamide + L-glutamate. The protein operates within amino-acid degradation; L-histidine degradation into L-glutamate; L-glutamate from N-formimidoyl-L-glutamate (hydrolase route): step 1/1. Functionally, catalyzes the conversion of N-formimidoyl-L-glutamate to L-glutamate and formamide. The polypeptide is Formimidoylglutamase (Salmonella enteritidis PT4 (strain P125109)).